The chain runs to 94 residues: Pyrimidine/purine nucleoside phosphorylase (94 aa).

This sequence belongs to the nucleoside phosphorylase PpnP family.

It catalyses the reaction a purine D-ribonucleoside + phosphate = a purine nucleobase + alpha-D-ribose 1-phosphate. The catalysed reaction is adenosine + phosphate = alpha-D-ribose 1-phosphate + adenine. It carries out the reaction cytidine + phosphate = cytosine + alpha-D-ribose 1-phosphate. The enzyme catalyses guanosine + phosphate = alpha-D-ribose 1-phosphate + guanine. It catalyses the reaction inosine + phosphate = alpha-D-ribose 1-phosphate + hypoxanthine. The catalysed reaction is thymidine + phosphate = 2-deoxy-alpha-D-ribose 1-phosphate + thymine. It carries out the reaction uridine + phosphate = alpha-D-ribose 1-phosphate + uracil. The enzyme catalyses xanthosine + phosphate = alpha-D-ribose 1-phosphate + xanthine. Functionally, catalyzes the phosphorolysis of diverse nucleosides, yielding D-ribose 1-phosphate and the respective free bases. Can use uridine, adenosine, guanosine, cytidine, thymidine, inosine and xanthosine as substrates. Also catalyzes the reverse reactions. This Salmonella heidelberg (strain SL476) protein is Pyrimidine/purine nucleoside phosphorylase.